Reading from the N-terminus, the 900-residue chain is uncharacterized protein (900 aa).

Basic and acidic residues predominate over residues 1–16; it reads MGSNKEAKNIDSKNDR. Disordered regions lie at residues 1–84, 103–160, 512–556, 568–613, and 648–676; these read MGSN…KLSS, NSSR…PDPS, NFNQ…KKSG, LAST…KSAN, and KRSSNAQLQPEDEPPLSSPISSNSDNSFP. The segment covering 17–27 has biased composition (polar residues); the sequence is GLTSITSNKIS. Over residues 30–58 the composition is skewed to basic and acidic residues; the sequence is KAHDNHTSSMITEHKNADKEKGKQEKESR. 2 stretches are compositionally biased toward low complexity: residues 63-76 and 103-127; these read QSSSSVESHSPQVS and NSSRRSSDSAASSSVSKLKSAQLSK. At Ser105 the chain carries Phosphoserine. The segment covering 129 to 143 has biased composition (basic residues); that stretch reads GLHHHHTSNNKHSHR. Positions 528–537 are enriched in low complexity; that stretch reads SSRSLSLPSS. A compositionally biased stretch (basic residues) spans 543 to 553; that stretch reads KRKKSPTKATK. 2 stretches are compositionally biased toward low complexity: residues 570 to 601 and 665 to 676; these read STSHTTSPSVSPSISSSSSPKIQPQSHISSPP and SPISSNSDNSFP.

This is an uncharacterized protein from Saccharomyces cerevisiae (strain ATCC 204508 / S288c) (Baker's yeast).